We begin with the raw amino-acid sequence, 101 residues long: CRISPR-associated endoribonuclease Cas2 (101 aa).

Residue aspartate 17 participates in Mg(2+) binding.

Belongs to the CRISPR-associated endoribonuclease Cas2 protein family. Homodimer, forms a heterotetramer with a Cas1 homodimer. Mg(2+) serves as cofactor.

In terms of biological role, CRISPR (clustered regularly interspaced short palindromic repeat), is an adaptive immune system that provides protection against mobile genetic elements (viruses, transposable elements and conjugative plasmids). CRISPR clusters contain sequences complementary to antecedent mobile elements and target invading nucleic acids. CRISPR clusters are transcribed and processed into CRISPR RNA (crRNA). Functions as a ssRNA-specific endoribonuclease. Involved in the integration of spacer DNA into the CRISPR cassette. This Methanopyrus kandleri (strain AV19 / DSM 6324 / JCM 9639 / NBRC 100938) protein is CRISPR-associated endoribonuclease Cas2.